A 174-amino-acid chain; its full sequence is Large ribosomal subunit protein uL10 (174 aa).

This sequence belongs to the universal ribosomal protein uL10 family. As to quaternary structure, part of the ribosomal stalk of the 50S ribosomal subunit. The N-terminus interacts with L11 and the large rRNA to form the base of the stalk. The C-terminus forms an elongated spine to which L12 dimers bind in a sequential fashion forming a multimeric L10(L12)X complex.

In terms of biological role, forms part of the ribosomal stalk, playing a central role in the interaction of the ribosome with GTP-bound translation factors. The polypeptide is Large ribosomal subunit protein uL10 (Anaeromyxobacter sp. (strain K)).